The chain runs to 1071 residues: Nonribosomal peptide synthetase flvI (1071 aa).

The tract at residues 33–417 (RRVLEQHDAP…GSLHFISRKD (385 aa)) is adenylation. One can recognise a Carrier domain in the interval 552 to 628 (MPLTEIELKM…MLCQNIKTDV (77 aa)). At S589 the chain carries O-(pantetheine 4'-phosphoryl)serine. Positions 689-961 (NYTLRLEFKL…IDDRDIEQLS (273 aa)) are condensation.

This sequence belongs to the NRP synthetase family.

It catalyses the reaction (2S)-5,5-dimethylpiperidine-2-carboxylate + 10-hydroxy-pre-flavunoidine + ATP = flavunoidine + AMP + diphosphate + H(+). It functions in the pathway secondary metabolite biosynthesis; terpenoid biosynthesis. Nonribosomal peptide synthetase; part of the gene cluster that mediates the biosynthesis of flavunoidine, an alkaloidal terpenoid with a tetracyclic cage-like core connected to dimethylcadaverine via a C-N bond and acylated with 5,5-dimethyl-L-pipecolate. The tetracyclic core is synthesized by the terpene cyclase flvE and the cytochrome P450 monooxygenase flvD. The terpene cyclase flvE catalyzes the cyclization of farnesyl pyrophosphate (FPP) to form (1R,4R,5S)-(+)-acoradiene and the cytochrome P450 monooxygenase flvD is then responsible for oxidative conversion of (1R,4R,5S)-(+)-acoradiene into the tetracyclic cage present in the final product flavunoidine. In parallel, the N-methyltransferase flvH dimethylates L-lysine to give N,N-dimethyl-L-Lysin which is decarboxylated by flvG to afford dimethylcadaverine. The terpene cyclase-like protein flvF is the enzyme that attaches the dimethylcadaverine precusor at the C-7 of the tetracyclic cage to yield pre-flavunoidine. The cytochrome monooxygenase flvC hydroxylates the C-10 position of pre-flavunoidine whereas the NRPS flvI acylates the terpenoid core at the hydroxylated C-10 with dimethylpipecolate to yield final flavunoidine. The bifunctional enzyme flvA and the dehydrogenase flvB are responsible for the synthesis of the dimethylpipecolate precursor. The PLP-dependent lyase domain of flvA might use L-O-acetyl-homoserine and alpha-keto-isovalerate to form an intermediary ketone that can cyclize intramolecularly to yield an imine. The imine can be reduced by flvB to yield the 6-carboxylated pipecolate. The C-terminal alpha-KG-dependent oxygenase domain of flvA is then proposed to catalyze the decarboxylation to yield dimethylpipecolate. This is Nonribosomal peptide synthetase flvI from Aspergillus flavus (strain ATCC 200026 / FGSC A1120 / IAM 13836 / NRRL 3357 / JCM 12722 / SRRC 167).